A 523-amino-acid chain; its full sequence is ATP synthase subunit beta, mitochondrial (523 aa).

The transit peptide at 1-19 (MFSRVAKTSFSAVRAAKSQ) directs the protein to the mitochondrion. 201 to 208 (GGAGVGKT) contacts ATP.

Belongs to the ATPase alpha/beta chains family. As to quaternary structure, F-type ATPases have 2 components, CF(1) - the catalytic core - and CF(0) - the membrane proton channel. CF(1) has five subunits: alpha(3), beta(3), gamma(1), delta(1), epsilon(1). CF(0) has three main subunits: a, b and c.

It localises to the mitochondrion. The protein localises to the mitochondrion inner membrane. It catalyses the reaction ATP + H2O + 4 H(+)(in) = ADP + phosphate + 5 H(+)(out). In terms of biological role, mitochondrial membrane ATP synthase (F(1)F(0) ATP synthase or Complex V) produces ATP from ADP in the presence of a proton gradient across the membrane which is generated by electron transport complexes of the respiratory chain. F-type ATPases consist of two structural domains, F(1) - containing the extramembraneous catalytic core, and F(0) - containing the membrane proton channel, linked together by a central stalk and a peripheral stalk. During catalysis, ATP synthesis in the catalytic domain of F(1) is coupled via a rotary mechanism of the central stalk subunits to proton translocation. Subunits alpha and beta form the catalytic core in F(1). Rotation of the central stalk against the surrounding alpha(3)beta(3) subunits leads to hydrolysis of ATP in three separate catalytic sites on the beta subunits. This chain is ATP synthase subunit beta, mitochondrial, found in Hemicentrotus pulcherrimus (Sea urchin).